Here is a 244-residue protein sequence, read N- to C-terminus: Phosphoadenosine 5'-phosphosulfate reductase (244 aa).

Catalysis depends on cysteine 239, which acts as the Nucleophile; cysteine thiosulfonate intermediate.

Belongs to the PAPS reductase family. CysH subfamily.

It localises to the cytoplasm. The catalysed reaction is [thioredoxin]-disulfide + sulfite + adenosine 3',5'-bisphosphate + 2 H(+) = [thioredoxin]-dithiol + 3'-phosphoadenylyl sulfate. It participates in sulfur metabolism; hydrogen sulfide biosynthesis; sulfite from sulfate: step 3/3. In terms of biological role, catalyzes the formation of sulfite from phosphoadenosine 5'-phosphosulfate (PAPS) using thioredoxin as an electron donor. This Yersinia pseudotuberculosis serotype O:1b (strain IP 31758) protein is Phosphoadenosine 5'-phosphosulfate reductase.